A 283-amino-acid chain; its full sequence is Elongation factor Ts (283 aa).

An involved in Mg(2+) ion dislocation from EF-Tu region spans residues 79–82 (TDFV).

This sequence belongs to the EF-Ts family.

The protein resides in the cytoplasm. Its function is as follows. Associates with the EF-Tu.GDP complex and induces the exchange of GDP to GTP. It remains bound to the aminoacyl-tRNA.EF-Tu.GTP complex up to the GTP hydrolysis stage on the ribosome. In Shewanella frigidimarina (strain NCIMB 400), this protein is Elongation factor Ts.